Reading from the N-terminus, the 92-residue chain is Large ribosomal subunit protein eL43y (92 aa).

Residues 39–60 (CEFCGKYGVKRKAVGIWGCKDC) form a C4-type zinc finger.

It belongs to the eukaryotic ribosomal protein eL43 family.

The sequence is that of Large ribosomal subunit protein eL43y (RPL37AC) from Arabidopsis thaliana (Mouse-ear cress).